Reading from the N-terminus, the 130-residue chain is U-scoloptoxin(17)-Er1a (130 aa).

An N-terminal signal peptide occupies residues 1 to 18 (MKLLVFALFLQVVQLSLA).

This sequence belongs to the scoloptoxin-17 family. Post-translationally, contains 4 disulfide bonds. Expressed by the venom gland.

The protein resides in the secreted. The chain is U-scoloptoxin(17)-Er1a from Ethmostigmus rubripes (Giant centipede).